Consider the following 267-residue polypeptide: 4-hydroxy-tetrahydrodipicolinate reductase (267 aa).

Residues 8-13 (GAAGRM) and aspartate 34 each bind NAD(+). Residue arginine 35 coordinates NADP(+). Residues 98 to 100 (GTT) and 122 to 125 (AANF) each bind NAD(+). The Proton donor/acceptor role is filled by histidine 155. Histidine 156 is a binding site for (S)-2,3,4,5-tetrahydrodipicolinate. Catalysis depends on lysine 159, which acts as the Proton donor. Residue 165–166 (GT) coordinates (S)-2,3,4,5-tetrahydrodipicolinate.

Belongs to the DapB family.

The protein localises to the cytoplasm. The enzyme catalyses (S)-2,3,4,5-tetrahydrodipicolinate + NAD(+) + H2O = (2S,4S)-4-hydroxy-2,3,4,5-tetrahydrodipicolinate + NADH + H(+). It catalyses the reaction (S)-2,3,4,5-tetrahydrodipicolinate + NADP(+) + H2O = (2S,4S)-4-hydroxy-2,3,4,5-tetrahydrodipicolinate + NADPH + H(+). The protein operates within amino-acid biosynthesis; L-lysine biosynthesis via DAP pathway; (S)-tetrahydrodipicolinate from L-aspartate: step 4/4. Functionally, catalyzes the conversion of 4-hydroxy-tetrahydrodipicolinate (HTPA) to tetrahydrodipicolinate. The sequence is that of 4-hydroxy-tetrahydrodipicolinate reductase from Pseudomonas amygdali pv. tabaci (Pseudomonas syringae pv. tabaci).